Reading from the N-terminus, the 239-residue chain is Mitochondrial fission factor homolog B (239 aa).

At 1–219 the chain is on the cytoplasmic side; sequence MAEINRMQYE…ENKERVKHEM (219 aa). A disordered region spans residues 107-139; that stretch reads EGPAPATPHSKEVRSSGHLKRDGLASENSLRQN. Residues 115–130 show a composition bias toward basic and acidic residues; that stretch reads HSKEVRSSGHLKRDGL. Residues 184–214 adopt a coiled-coil conformation; sequence DLALADAASLRRQIIKLNRRLLLLEEENKER. The chain crosses the membrane as a helical; Anchor for type IV membrane protein span at residues 220–237; sequence TMYSIIIIFGLLNSWLWF. Topologically, residues 238 to 239 are extracellular; sequence RR.

Belongs to the Tango11 family.

Its subcellular location is the mitochondrion outer membrane. It localises to the peroxisome. Plays a role in mitochondrial and peroxisomal fission. Promotes the recruitment and association of the fission mediator dynamin-related protein 1 (DNM1L) to the mitochondrial surface. This Xenopus laevis (African clawed frog) protein is Mitochondrial fission factor homolog B (mff-b).